Consider the following 430-residue polypeptide: tRNA(Ile)-lysidine synthase (430 aa).

An ATP-binding site is contributed by 24 to 29 (SGGLDS).

It belongs to the tRNA(Ile)-lysidine synthase family.

The protein resides in the cytoplasm. The enzyme catalyses cytidine(34) in tRNA(Ile2) + L-lysine + ATP = lysidine(34) in tRNA(Ile2) + AMP + diphosphate + H(+). Its function is as follows. Ligates lysine onto the cytidine present at position 34 of the AUA codon-specific tRNA(Ile) that contains the anticodon CAU, in an ATP-dependent manner. Cytidine is converted to lysidine, thus changing the amino acid specificity of the tRNA from methionine to isoleucine. The polypeptide is tRNA(Ile)-lysidine synthase (Haemophilus influenzae (strain ATCC 51907 / DSM 11121 / KW20 / Rd)).